The following is a 105-amino-acid chain: Met repressor (105 aa).

It belongs to the MetJ family. Homodimer.

The protein localises to the cytoplasm. In terms of biological role, this regulatory protein, when combined with SAM (S-adenosylmethionine) represses the expression of the methionine regulon and of enzymes involved in SAM synthesis. The sequence is that of Met repressor from Photorhabdus laumondii subsp. laumondii (strain DSM 15139 / CIP 105565 / TT01) (Photorhabdus luminescens subsp. laumondii).